The sequence spans 683 residues: WD repeat-containing protein 48 homolog (683 aa).

WD repeat units lie at residues 27 to 82 (SNRS…PVQY), 88 to 130 (QHTD…FIDC), 133 to 167 (THKD…INAN), 176 to 215 (GCKD…KIMK), 218 to 257 (GHTD…CIAT), 260 to 299 (AHEE…KSQL), and 302 to 343 (KEEA…QLSI). Positions 341–364 (LSIGGDEDGPSTSNANHSVSASSS) are disordered. Positions 351-364 (STSNANHSVSASSS) are enriched in low complexity. Residues 389-428 (PGAPAIKKHAMLSDKRHVLTRDSDGNVALYDVLAARKIKD) form a WD 8 repeat.

This sequence belongs to the WD repeat WDR48 family. In terms of assembly, interacts with usp-46; the interaction increases the catalytic activity of usp-46 in the presence of wdr-20. In terms of tissue distribution, expressed in several head neurons and cells in the tail including the anal depressor cell.

In terms of biological role, together with wdr-20, binds to and stimulates the activity of the deubiquitinating enzyme usp-46, leading to deubiquitination and stabilization of the glr-1 glutamate receptor. In Caenorhabditis elegans, this protein is WD repeat-containing protein 48 homolog (wdr-48).